The chain runs to 257 residues: A-factor type gamma-butyrolactone 1'-reductase (1S-forming) (257 aa).

The active-site Proton acceptor is tyrosine 161.

The protein belongs to the short-chain dehydrogenases/reductases (SDR) family. Homodimer.

The catalysed reaction is a (3R,4R)-3-[(1S)-1-hydroxyalkyl]-4-(hydroxymethyl)oxolan-2-one + NADP(+) = a (3R,4R)-3-alkanoyl-4-(hydroxymethyl)oxolan-2-one + NADPH + H(+). Involved in the biosynthesis of virginiae butanolide (VB), which regulates the production of antibiotic virginiamycin. Catalyzes the reduction of 6-dehydro-VB-A to VB-A, the last catalytic step in VB biosynthesis. In vitro, can use various synthetic A-factor-type analogs. The polypeptide is A-factor type gamma-butyrolactone 1'-reductase (1S-forming) (Streptomyces virginiae (Streptomyces cinnamonensis)).